Consider the following 296-residue polypeptide: Protease HtpX homolog (296 aa).

Transmembrane regions (helical) follow at residues 7-27 (TVLL…LVAG) and 29-49 (QGMI…YFFS). A Zn(2+)-binding site is contributed by H131. E132 is a catalytic residue. H135 contacts Zn(2+). 2 helical membrane passes run 141–161 (ILIS…ANMA) and 178–198 (IASI…ATLI). E207 contacts Zn(2+).

The protein belongs to the peptidase M48B family. Zn(2+) serves as cofactor.

It is found in the cell inner membrane. This chain is Protease HtpX homolog, found in Sulfurihydrogenibium sp. (strain YO3AOP1).